A 1097-amino-acid chain; its full sequence is MCPSEMGTLWYLWSPVLISLAALFSKVTEGRGILESIQRFSLLPTYLPVTYHINNADVSFFLKEANQDIMRNSSLQSRVESFLIYKSRRLPVLNASYGPFSLEQVVPQDLMLPSNPFGFTNTFSLNWRLKAYILQEKVYLSHPKVQVLFHIVGRDWDDHRDENLPCLRVFAFRETREVRGSCRLGGALGLCVAQLEMLPGWFSPPSVVSGRRRPTEQPEGNPVELYYAVQPGDERGDCAKEDSRKSGGTPAGHNDVDESSPPLHRIGSVFLRETPSSPPLKELRLDSNVAVHYVPKTVRQGDVLTFPISVSRNCTEDRFTLRAKVKKGVSIVGVRASSSSIWDVRQSTEYTGKYAPAVIVCQKKSAGSEKSVADASYEVMKIDIEVEAPSDPPTTQLVTWQVEYPGEITSDLGVSKIYVSQKDLIEVIPLAMEAEILNTAILTGKTVAVPVKVISVEEDGTVQGLLDSVECRSSDEDVVKVSDRCDYVFVNGKEMKGKVNVVVSFTYQHLSSPLEMTVWVPRLPLQIEVSDMELNQIKGWRVPIVSNKRPARDSEEEDDDEKKGRGCTLQYQHAMVRVLTQFVAEAPDPGGHLAYLLGSDWQVDITELITDFMQVEEPRIAKLQGGQILTGQELGMTTIQILSPLSDAILAEKTITVLDEKVTITDLGVQLVTGLSLSLQLSPGSNRAIFATAMAQELLQRPKQEAAISCWVQFSDGSVTPLDIYDEKDFSLMATSLDEKVVSILQDPKFKWPIIAAENEGQGALVKVEMLISESCQKSKRKSVLAVGTASIKVKFGQNDANPNSSESGHLGAGLHVENINDRRSKKPFQEWGSPEGPFYSSSSMGLMEGWGSTTKRPTFQKKEGQENLLDDIILSQTMATDLTSFPDQMDLPGSNVGTEEHDLDQAAKGLSDLEIGMYALLGVFCLAILVFLINCVTFALKYRHKQVPFEEQEGLSHSHDWVGLSNRTELLGNHMNFASSQEEQITAIDRGLDFEESKLLLSSNSQNSINGQMFRSTGAMLTDDQEQKSEPPTSPTSKRKRVTFSTFSAISSDDGCPSGNTMVLSNEDDIKWVCQGLDPGECTEPHSCMERLHEHV.

Residues 1–30 (MCPSEMGTLWYLWSPVLISLAALFSKVTEG) form the signal peptide. Residues 31-913 (RGILESIQRF…LDQAAKGLSD (883 aa)) lie on the Extracellular side of the membrane. Positions 233 to 245 (DERGDCAKEDSRK) are enriched in basic and acidic residues. The tract at residues 233–263 (DERGDCAKEDSRKSGGTPAGHNDVDESSPPL) is disordered. Residues 914 to 934 (LEIGMYALLGVFCLAILVFLI) form a helical membrane-spanning segment. The Cytoplasmic segment spans residues 935-1097 (NCVTFALKYR…SCMERLHEHV (163 aa)). Residues 1021-1042 (MLTDDQEQKSEPPTSPTSKRKR) form a disordered region.

This sequence belongs to the TMEM132 family. In terms of tissue distribution, expressed in mature oligodendrocytes in the white and gray matter of the brain.

Its subcellular location is the membrane. Functionally, regulates neuronal morphology via inhibition of the WAVE regulatory complex (WCR), a complex that controls F-actin cytoskeletal dynamics. The polypeptide is Transmembrane protein 132D (Tmem132d) (Mus musculus (Mouse)).